The following is a 511-amino-acid chain: Bifunctional purine biosynthesis protein PurH (511 aa).

The 145-residue stretch at 1 to 145 (MKKRALVSVS…KNHKFVSVIV (145 aa)) folds into the MGS-like domain.

It belongs to the PurH family.

The enzyme catalyses (6R)-10-formyltetrahydrofolate + 5-amino-1-(5-phospho-beta-D-ribosyl)imidazole-4-carboxamide = 5-formamido-1-(5-phospho-D-ribosyl)imidazole-4-carboxamide + (6S)-5,6,7,8-tetrahydrofolate. The catalysed reaction is IMP + H2O = 5-formamido-1-(5-phospho-D-ribosyl)imidazole-4-carboxamide. It participates in purine metabolism; IMP biosynthesis via de novo pathway; 5-formamido-1-(5-phospho-D-ribosyl)imidazole-4-carboxamide from 5-amino-1-(5-phospho-D-ribosyl)imidazole-4-carboxamide (10-formyl THF route): step 1/1. The protein operates within purine metabolism; IMP biosynthesis via de novo pathway; IMP from 5-formamido-1-(5-phospho-D-ribosyl)imidazole-4-carboxamide: step 1/1. This chain is Bifunctional purine biosynthesis protein PurH, found in Bacillus thuringiensis subsp. konkukian (strain 97-27).